The following is a 224-amino-acid chain: Orotidine 5'-phosphate decarboxylase (224 aa).

Substrate is bound by residues Asp10, Lys32, 59-68, Thr115, Arg175, Gln184, Gly204, and Arg205; that span reads DLKLHDIPNT. The active-site Proton donor is the Lys61.

The protein belongs to the OMP decarboxylase family. Type 1 subfamily. As to quaternary structure, homodimer.

It catalyses the reaction orotidine 5'-phosphate + H(+) = UMP + CO2. It functions in the pathway pyrimidine metabolism; UMP biosynthesis via de novo pathway; UMP from orotate: step 2/2. Catalyzes the decarboxylation of orotidine 5'-monophosphate (OMP) to uridine 5'-monophosphate (UMP). The protein is Orotidine 5'-phosphate decarboxylase of Sphingopyxis alaskensis (strain DSM 13593 / LMG 18877 / RB2256) (Sphingomonas alaskensis).